Here is a 495-residue protein sequence, read N- to C-terminus: Probable plastidic glucose transporter 3 (495 aa).

12 helical membrane-spanning segments follow: residues 55 to 75 (LPHVLVASLTSLLFGYHLGVV), 97 to 117 (LVVSTCLGGAFIGSLFSGLVA), 131 to 151 (LPMIVGASVSASTESLMGMLL), 154 to 174 (FLVGIGMGIGPSVTALYVTEV), 183 to 203 (YGSSTQIATCIGLLGSLFAGI), 214 to 234 (ICFWISTVPAAMLAVFMELCV), 294 to 314 (VVFIGSTLFALQQLSGINAVF), 330 to 350 (SANICVGVCNLLGSTVAVVLM), 357 to 377 (VLLIGSFAGMAVSLGLQAIAY), 384 to 404 (FGTLFLSVGGMLLFVLSFATG), 425 to 445 (ALAVCLAVHWVINFFVGLLFL), and 451 to 471 (LGSVLLNAIFGFFCVVAVIFV).

Belongs to the major facilitator superfamily. Sugar transporter (TC 2.A.1.1) family.

The protein localises to the plastid. It localises to the chloroplast membrane. Functionally, may be involved in the efflux of glucose towards the cytosol. The sequence is that of Probable plastidic glucose transporter 3 from Arabidopsis thaliana (Mouse-ear cress).